A 232-amino-acid chain; its full sequence is Mitochondrial import inner membrane translocase subunit Tim21 (232 aa).

Residues 1–31 constitute a mitochondrion transit peptide; that stretch reads MLPRFLWRPVLCSYRALGSPSRSLTVSYRNL. Residues 96 to 116 form a helical membrane-spanning segment; that stretch reads FTYFIVVLIGIGVTGGLFYVV.

Belongs to the TIM21 family.

The protein resides in the mitochondrion membrane. In terms of biological role, may participate in the translocation of transit peptide-containing proteins across the mitochondrial inner membrane. The polypeptide is Mitochondrial import inner membrane translocase subunit Tim21 (timm21) (Xenopus laevis (African clawed frog)).